Reading from the N-terminus, the 229-residue chain is Flagellar L-ring protein (229 aa).

A signal peptide spans 1–25 (MKQVRLLPSAAVRAACALAAAALAG). Residue Cys-26 is the site of N-palmitoyl cysteine attachment. Cys-26 is lipidated: S-diacylglycerol cysteine.

Belongs to the FlgH family. In terms of assembly, the basal body constitutes a major portion of the flagellar organelle and consists of four rings (L,P,S, and M) mounted on a central rod.

It localises to the cell outer membrane. Its subcellular location is the bacterial flagellum basal body. Functionally, assembles around the rod to form the L-ring and probably protects the motor/basal body from shearing forces during rotation. In Burkholderia multivorans (strain ATCC 17616 / 249), this protein is Flagellar L-ring protein.